Here is a 271-residue protein sequence, read N- to C-terminus: Thiamine thiazole synthase (271 aa).

Residues Ser-39, 58-59 (ER), Gly-66, Val-130, and 158-160 (HVD) contribute to the NAD(+) site. Fe cation contacts are provided by Asp-160 and His-175. Met-225 serves as a coordination point for NAD(+). Glycine is bound at residue Arg-235.

Belongs to the THI4 family. In terms of assembly, homooctamer; tetramer of dimers. It depends on Fe(2+) as a cofactor.

It catalyses the reaction hydrogen sulfide + glycine + NAD(+) = ADP-5-ethyl-4-methylthiazole-2-carboxylate + nicotinamide + 3 H2O + H(+). It functions in the pathway cofactor biosynthesis; thiamine diphosphate biosynthesis. Involved in the biosynthesis of the thiazole moiety of thiamine. Catalyzes the conversion of NAD and glycine to adenosine diphosphate 5-(2-hydroxyethyl)-4-methylthiazole-2-carboxylate (ADT), an adenylated thiazole intermediate, using free sulfide as a source of sulfur. The sequence is that of Thiamine thiazole synthase from Metallosphaera sedula (strain ATCC 51363 / DSM 5348 / JCM 9185 / NBRC 15509 / TH2).